The primary structure comprises 362 residues: Ribosome-binding ATPase YchF (362 aa).

In terms of domain architecture, OBG-type G spans 2–258 (LSAGIVGLPN…LDANGRQDWL (257 aa)). An ATP-binding site is contributed by 11–16 (NVGKST). Residues serine 15 and threonine 35 each coordinate Mg(2+). One can recognise a TGS domain in the interval 281–347 (GLWSFFTFGK…EAKKQGLVRL (67 aa)).

It belongs to the TRAFAC class OBG-HflX-like GTPase superfamily. OBG GTPase family. YchF/OLA1 subfamily. Mg(2+) serves as cofactor.

In terms of biological role, ATPase that binds to both the 70S ribosome and the 50S ribosomal subunit in a nucleotide-independent manner. The sequence is that of Ribosome-binding ATPase YchF from Mycoplasma pneumoniae (strain ATCC 29342 / M129 / Subtype 1) (Mycoplasmoides pneumoniae).